Here is a 660-residue protein sequence, read N- to C-terminus: Protein SCARECROW 2 (660 aa).

Disordered regions lie at residues 1-33 (MGSS…ITSL) and 190-286 (SDPA…KQRD). The span at 192 to 229 (PAPPPPPPSHPALLPPDATAPPPPPTSVAALPPPPPAQ) shows a compositional bias: pro residues. Low complexity predominate over residues 259–272 (AAAAAAAAAAAAAA). The stretch at 262–289 (AAAAAAAAAAAAKERKEEQRRKQRDEEG) forms a coiled coil. A compositionally biased stretch (basic and acidic residues) spans 273-286 (AKERKEEQRRKQRD). The region spanning 283 to 653 (KQRDEEGLHL…LCLLTASAWR (371 aa)) is the GRAS domain. Positions 290-354 (LHLLTLLLQC…VSSCLGLYAP (65 aa)) are leucine repeat I (LRI). The LxCxE motif signature appears at 297-301 (LQCAE). The segment at 373 to 438 (FQVFNGISPF…GGPPRVRLTG (66 aa)) is VHIID. Residues 404 to 408 (VHIID) carry the VHIID motif. Positions 448–480 (ATGKRLSDFADTLGLPFEFCPVADKAGNLDPEK) are leucine repeat II (LRII). The PFYRE stretch occupies residues 489–576 (VAVHWLRHSL…QQLLSREIRN (88 aa)). The tract at residues 579–653 (AVGGPARTGD…LCLLTASAWR (75 aa)) is SAW.

This sequence belongs to the GRAS family.

The protein localises to the cytoplasm. Its function is as follows. Probable transcription factor involved in asmmetric cell division in the cortex/endodermis progenitor cell and in the process of stomata and ligule formation in leaves. This is Protein SCARECROW 2 (SCR2) from Oryza sativa subsp. indica (Rice).